Reading from the N-terminus, the 181-residue chain is GMP synthase [glutamine-hydrolyzing] subunit A (181 aa).

A Glutamine amidotransferase type-1 domain is found at 2–181 (KILVVNNYGQ…FDNFLEICRR (180 aa)). Cysteine 72 acts as the Nucleophile in catalysis. Residues histidine 159 and glutamate 161 contribute to the active site.

Heterodimer composed of a glutamine amidotransferase subunit (A) and a GMP-binding subunit (B).

It carries out the reaction XMP + L-glutamine + ATP + H2O = GMP + L-glutamate + AMP + diphosphate + 2 H(+). It functions in the pathway purine metabolism; GMP biosynthesis; GMP from XMP (L-Gln route): step 1/1. Functionally, catalyzes the synthesis of GMP from XMP. This chain is GMP synthase [glutamine-hydrolyzing] subunit A, found in Methanothrix thermoacetophila (strain DSM 6194 / JCM 14653 / NBRC 101360 / PT) (Methanosaeta thermophila).